We begin with the raw amino-acid sequence, 501 residues long: MFDNILEQQRIEKAKELKNLGINPYPHFLEKEMSLKTFKDKFSYILEQVEKRDESVNAVVAGRLKLLRIAGKSIFANIEDEDTNLQIYFSKDSVGEELYTILKKNLEAGDIVLVKGFPFVTKTGEFSLHASEVKLATKAIVPLPEKYHGLTDIEQRYRKRYVDMIMNAEVRKDFLVRSKVVSLIRHFFENKGFLEVETPMMHPIAGGANAKPFVTFHNSLGVERFLRIAPELYLKRLVVGGFEAVFEINRCFRNEGMDLTHNPEFTTIEFYWAYHNYKDLMDLTEELFALLLDKLNLGKTIEFDGKMIDFSKPFERITYKDALCKYGGLDRDLIEDKEKILAKLKTDGFEANEKLELGHLQAELFDNYVEEKLINPTFVSDFPISISPLSRRSDENSQIAERFELFICGRELANGFNELNDPLDQYERFLKQIEAKNAGDEEACEMDEDFVNALGYGMPPTAGQGIGIDRLVMLLTNKKSIRDVILFPAMRPLKSELKEKE.

Residues glutamate 404 and glutamate 411 each contribute to the Mg(2+) site.

It belongs to the class-II aminoacyl-tRNA synthetase family. As to quaternary structure, homodimer. The cofactor is Mg(2+).

It localises to the cytoplasm. The catalysed reaction is tRNA(Lys) + L-lysine + ATP = L-lysyl-tRNA(Lys) + AMP + diphosphate. The chain is Lysine--tRNA ligase from Campylobacter jejuni subsp. doylei (strain ATCC BAA-1458 / RM4099 / 269.97).